Consider the following 174-residue polypeptide: MKREQKAQIIEELAGKLRENSVVLVDYQGMDVAQSTELRRRSREAGVDFVVAKNTLTLRAAEEAGLPSLTEFLVGPTALAFSRDPVAAAKLMAEYADEIETFRLKGGLLEGSRVLNEQEVEALSKLPGRDQLIAQVVGGMAAPISGLVSVLNNTIQGLVVALGQIAEQKQAQQA.

Belongs to the universal ribosomal protein uL10 family. Part of the ribosomal stalk of the 50S ribosomal subunit. The N-terminus interacts with L11 and the large rRNA to form the base of the stalk. The C-terminus forms an elongated spine to which L12 dimers bind in a sequential fashion forming a multimeric L10(L12)X complex.

Forms part of the ribosomal stalk, playing a central role in the interaction of the ribosome with GTP-bound translation factors. In Rubrobacter xylanophilus (strain DSM 9941 / JCM 11954 / NBRC 16129 / PRD-1), this protein is Large ribosomal subunit protein uL10.